The following is a 163-amino-acid chain: Glutathione peroxidase-like peroxiredoxin HYR1 (163 aa).

Residue cysteine 36 is the Cysteine sulfenic acid (-SOH) intermediate of the active site. Cysteines 36 and 82 form a disulfide.

It belongs to the glutathione peroxidase family. As to quaternary structure, interacts with YAP1 and probably YBP1.

It localises to the cytoplasm. Its subcellular location is the mitochondrion intermembrane space. The protein localises to the peroxisome matrix. It carries out the reaction a hydroperoxide + [thioredoxin]-dithiol = an alcohol + [thioredoxin]-disulfide + H2O. Its function is as follows. Involved in oxidative stress response and redox homeostasis. Functions as a sensor and transducer of hydroperoxide stress. In response to hydroperoxide stress it oxidizes (activates) the transcription activator YAP1, which is involved in transcription activation of genes of the oxidative stress response pathway. May also play a direct role in hydroperoxide scavenging, being the most active of three closely related S.cerevisiae peroxiredoxins (GPX1, GPX2, and HYR1/GPX3) with respect to peroxide and lipid hydroperoxide reduction. The three enzymes are not required for the glutaredoxin-mediated antioxidant function. In the presence of peroxides, HYR1/GPX3 is directly oxidized at Cys-36 to form a cysteine sulfenic acid (-SOH). Cys-36-SOH then forms either an intramolecular disulfide bond (Cys-36 with Cys-82) or a transient, intermolecular disulfide bond with 'Cys-598' of YAP1, which is further resolved into a YAP1 intramolecular disulfide bond ('Cys-303' with 'Cys-598'), which causes its nuclear accumulation and activation, and a reduced Cys-36 in HYR1/GPX3. This Saccharomyces cerevisiae (strain ATCC 204508 / S288c) (Baker's yeast) protein is Glutathione peroxidase-like peroxiredoxin HYR1.